The following is a 154-amino-acid chain: Large-conductance mechanosensitive channel (154 aa).

The next 2 membrane-spanning stretches (helical) occupy residues 14-34 (VVDL…VNSL) and 86-106 (VFIN…FFVV).

It belongs to the MscL family. In terms of assembly, homopentamer.

It is found in the cell membrane. Channel that opens in response to stretch forces in the membrane lipid bilayer. May participate in the regulation of osmotic pressure changes within the cell. The sequence is that of Large-conductance mechanosensitive channel from Dehalococcoides mccartyi (strain CBDB1).